We begin with the raw amino-acid sequence, 844 residues long: RPA-related protein RADX (844 aa).

A DNA-binding region (OB) is located at residues Trp-228–Asn-331. Disordered regions lie at residues Pro-571–Asp-609 and Gly-626–Ser-664. The span at Ala-572–Ala-587 shows a compositional bias: polar residues. Positions Lys-590–Met-608 are enriched in basic and acidic residues. Over residues Ser-652–Gly-662 the composition is skewed to polar residues.

The protein resides in the chromosome. Its function is as follows. Single-stranded DNA-binding protein recruited to replication forks to maintain genome stability. Prevents fork collapse by antagonizing the accumulation of RAD51 at forks to ensure the proper balance of fork remodeling and protection without interfering with the capacity of cells to complete homologous recombination of double-strand breaks. This chain is RPA-related protein RADX, found in Rattus norvegicus (Rat).